The following is a 199-amino-acid chain: MIQISDKAQTYFRKLIEREGVPGMGVRLSAVDAGTPRADARLEFAEPADLSGDEWAIDCDGFTLYVVAASVPWMDGAEIDYVTQSTGNQQLTIKAPKIKGEAPAESASMVERVRWVVENEINPQLASHGGRVAVQEVSADGVVLLRFGGGCHGCGMADVTLKQGIEKTLMGRVPGVTAVRDATDHATGDAPYIPRDSAA.

[4Fe-4S] cluster-binding residues include cysteine 151 and cysteine 154.

The protein belongs to the NfuA family. In terms of assembly, homodimer. [4Fe-4S] cluster serves as cofactor.

In terms of biological role, involved in iron-sulfur cluster biogenesis. Binds a 4Fe-4S cluster, can transfer this cluster to apoproteins, and thereby intervenes in the maturation of Fe/S proteins. Could also act as a scaffold/chaperone for damaged Fe/S proteins. In Xanthomonas euvesicatoria pv. vesicatoria (strain 85-10) (Xanthomonas campestris pv. vesicatoria), this protein is Fe/S biogenesis protein NfuA.